The following is a 55-amino-acid chain: Large ribosomal subunit protein bL33 (55 aa).

It belongs to the bacterial ribosomal protein bL33 family.

This is Large ribosomal subunit protein bL33 from Wigglesworthia glossinidia brevipalpis.